A 153-amino-acid polypeptide reads, in one-letter code: UPF0178 protein MXAN_5526 (153 aa).

This sequence belongs to the UPF0178 family.

This chain is UPF0178 protein MXAN_5526, found in Myxococcus xanthus (strain DK1622).